An 827-amino-acid chain; its full sequence is Glycerol-3-phosphate acyltransferase (827 aa).

An HXXXXD motif motif is present at residues 325-330 (CHRSHM).

The protein belongs to the GPAT/DAPAT family.

The protein localises to the cell inner membrane. It carries out the reaction sn-glycerol 3-phosphate + an acyl-CoA = a 1-acyl-sn-glycero-3-phosphate + CoA. It functions in the pathway phospholipid metabolism; CDP-diacylglycerol biosynthesis; CDP-diacylglycerol from sn-glycerol 3-phosphate: step 1/3. In Shigella sonnei (strain Ss046), this protein is Glycerol-3-phosphate acyltransferase.